Reading from the N-terminus, the 318-residue chain is Galactofuranose-binding protein YtfQ (318 aa).

The signal sequence occupies residues 1 to 21 (MWKRLLIVSAVSAAMSSMALA). Beta-D-galactofuranose-binding positions include 34-38 (ESGWR), 111-112 (DR), Arg167, Asn220, and Asp248. An intrachain disulfide couples Cys150 to Cys214.

It belongs to the bacterial solute-binding protein 2 family. The complex is composed of two ATP-binding proteins (YtfR), two transmembrane proteins (YtfT and YjfF) and a solute-binding protein (YtfQ).

The protein localises to the periplasm. Its function is as follows. Part of the ABC transporter complex YtfQRT-YjfF involved in galactofuranose transport. Binds to both alpha- and beta-galactofuranose. The protein is Galactofuranose-binding protein YtfQ (ytfQ) of Escherichia coli (strain K12).